A 589-amino-acid chain; its full sequence is Cytochrome P450 monooxygenase TRI13 (589 aa).

The N-terminal stretch at 1 to 21 (MFLSLCLMVLALYLLYKWALP) is a signal peptide. 4 N-linked (GlcNAc...) asparagine glycosylation sites follow: N52, N219, N243, and N366. C531 contributes to the heme binding site.

It belongs to the cytochrome P450 family. Heme is required as a cofactor.

Its pathway is sesquiterpene biosynthesis; trichothecene biosynthesis. Cytochrome P450 monooxygenase; part of the core gene cluster that mediates the biosynthesis of trichothecenes, a very large family of chemically related bicyclic sesquiterpene compounds acting as mycotoxins, including T2-toxin. The biosynthesis of trichothecenes begins with the cyclization of farnesyl diphosphate to trichodiene and is catalyzed by the trichodiene synthase TRI5. Trichodiene undergoes a series of oxygenations catalyzed by the cytochrome P450 monooxygenase TRI4. TRI4 controls the addition of four oxygens at C-2, C-3, C-11, and the C-12, C-13-epoxide to form the intermediate isotrichotriol. Isotrichotriol then undergoes a non-enzymatic isomerization and cyclization to form isotrichodermol. During this process, the oxygen at the C-2 position becomes the pyran ring oxygen and the hydroxyl group at C-11 is lost. More complex type A trichothecenes are built by modifying isotrichodermol through a series of paired hydroxylation and acetylation or acylation steps. Isotrichodermol is converted to isotrichodermin by the acetyltransferase TRI101. TRI101 encodes a C-3 transacetylase that acts as a self-protection or resistance factor during biosynthesis and that the presence of a free C-3 hydroxyl group is a key component of Fusarium trichothecene phytotoxicity. A second hydroxyl group is added to C-15 by the trichothecene C-15 hydroxylase TRI11, producing 15-decalonectrin, which is then acetylated by TRI3, producing calonectrin. A third hydroxyl group is added at C-4 by the cytochrome P450 monooxygenase TRI13, converting calonectrin to 3,15-diacetoxyspirpenol, which is subsequently acetylated by the acetyltransferase TRI7. A fourth hydroxyl group is added to C-8 by the cytochrome P450 monooxygenase TRI1, followed by the addition of an isovaleryl moiety by TRI16. Finally, the acetyl group is removed from the C-3 position by the trichothecene C-3 esterase TRI8 to produce T-2 toxin. This chain is Cytochrome P450 monooxygenase TRI13, found in Fusarium sporotrichioides.